The sequence spans 95 residues: Aspartyl/glutamyl-tRNA(Asn/Gln) amidotransferase subunit C (95 aa).

It belongs to the GatC family. As to quaternary structure, heterotrimer of A, B and C subunits.

The enzyme catalyses L-glutamyl-tRNA(Gln) + L-glutamine + ATP + H2O = L-glutaminyl-tRNA(Gln) + L-glutamate + ADP + phosphate + H(+). It carries out the reaction L-aspartyl-tRNA(Asn) + L-glutamine + ATP + H2O = L-asparaginyl-tRNA(Asn) + L-glutamate + ADP + phosphate + 2 H(+). In terms of biological role, allows the formation of correctly charged Asn-tRNA(Asn) or Gln-tRNA(Gln) through the transamidation of misacylated Asp-tRNA(Asn) or Glu-tRNA(Gln) in organisms which lack either or both of asparaginyl-tRNA or glutaminyl-tRNA synthetases. The reaction takes place in the presence of glutamine and ATP through an activated phospho-Asp-tRNA(Asn) or phospho-Glu-tRNA(Gln). In Dechloromonas aromatica (strain RCB), this protein is Aspartyl/glutamyl-tRNA(Asn/Gln) amidotransferase subunit C.